Here is a 296-residue protein sequence, read N- to C-terminus: Immediate early response gene 5-like protein (296 aa).

Belongs to the IER family.

The polypeptide is Immediate early response gene 5-like protein (ier5l) (Xenopus tropicalis (Western clawed frog)).